The sequence spans 243 residues: 1-(5-phosphoribosyl)-5-[(5-phosphoribosylamino)methylideneamino] imidazole-4-carboxamide isomerase (243 aa).

Asp-8 serves as the catalytic Proton acceptor. Asp-130 acts as the Proton donor in catalysis.

Belongs to the HisA/HisF family.

The protein resides in the cytoplasm. The catalysed reaction is 1-(5-phospho-beta-D-ribosyl)-5-[(5-phospho-beta-D-ribosylamino)methylideneamino]imidazole-4-carboxamide = 5-[(5-phospho-1-deoxy-D-ribulos-1-ylimino)methylamino]-1-(5-phospho-beta-D-ribosyl)imidazole-4-carboxamide. It functions in the pathway amino-acid biosynthesis; L-histidine biosynthesis; L-histidine from 5-phospho-alpha-D-ribose 1-diphosphate: step 4/9. The sequence is that of 1-(5-phosphoribosyl)-5-[(5-phosphoribosylamino)methylideneamino] imidazole-4-carboxamide isomerase from Acinetobacter baumannii (strain AB307-0294).